The following is a 242-amino-acid chain: 3-deoxy-manno-octulosonate cytidylyltransferase (242 aa).

It belongs to the KdsB family.

The protein resides in the cytoplasm. It catalyses the reaction 3-deoxy-alpha-D-manno-oct-2-ulosonate + CTP = CMP-3-deoxy-beta-D-manno-octulosonate + diphosphate. It participates in nucleotide-sugar biosynthesis; CMP-3-deoxy-D-manno-octulosonate biosynthesis; CMP-3-deoxy-D-manno-octulosonate from 3-deoxy-D-manno-octulosonate and CTP: step 1/1. It functions in the pathway bacterial outer membrane biogenesis; lipopolysaccharide biosynthesis. Its function is as follows. Activates KDO (a required 8-carbon sugar) for incorporation into bacterial lipopolysaccharide in Gram-negative bacteria. The chain is 3-deoxy-manno-octulosonate cytidylyltransferase from Anaeromyxobacter sp. (strain K).